A 655-amino-acid chain; its full sequence is Probable glucan endo-1,3-beta-glucosidase btgC (655 aa).

2 disordered regions span residues 1-61 (MSGD…ATPG) and 89-114 (SGVDAFRDTDGGNFPAERGYNAPGSD). Over 1–282 (MSGDPRSFSF…PKPGTGSRKR (282 aa)) the chain is Cytoplasmic. Residues 19-33 (DSSQQPLHPTNTMAD) are compositionally biased toward polar residues. A compositionally biased stretch (basic and acidic residues) spans 89–98 (SGVDAFRDTD). Residues 283–303 (GWIVGIILAVVIVGAIVGGAV) form a helical; Signal-anchor for type II membrane protein membrane-spanning segment. Residues 304–655 (GGTLGNREKE…IPDCGGKTAT (352 aa)) lie on the Extracellular side of the membrane. A disordered region spans residues 305-338 (GTLGNREKESPSSSETASGDEKVNGDLGKDSDEI). Residues 323–338 (GDEKVNGDLGKDSDEI) show a composition bias toward basic and acidic residues. N426 carries an N-linked (GlcNAc...) asparagine glycan. The Proton donor role is filled by E458. E557 functions as the Nucleophile in the catalytic mechanism. N-linked (GlcNAc...) asparagine glycans are attached at residues N576 and N602.

It belongs to the glycosyl hydrolase 17 family.

It is found in the cell membrane. The enzyme catalyses Hydrolysis of (1-&gt;3)-beta-D-glucosidic linkages in (1-&gt;3)-beta-D-glucans.. Glucanases play a role in cell expansion during growth, in cell-cell fusion during mating, and in spore release during sporulation. This enzyme may be involved in beta-glucan degradation. Active on laminarin and lichenan. This is Probable glucan endo-1,3-beta-glucosidase btgC (btgC) from Aspergillus terreus (strain NIH 2624 / FGSC A1156).